The chain runs to 553 residues: Threonylcarbamoyladenosine tRNA methylthiotransferase (553 aa).

The tract at residues 21 to 61 is disordered; sequence SAEDVKPQERYQNKKSVTVRAKKRVQIKPETDAEEKPTPRP. Composition is skewed to basic and acidic residues over residues 23 to 32 and 47 to 58; these read EDVKPQERYQ and IKPETDAEEKPT. One can recognise an MTTase N-terminal domain in the interval 72–179; the sequence is QKVFVKTWGC…VVEVVEETLK (108 aa). [4Fe-4S] cluster contacts are provided by C81, C116, C145, C221, C225, and C228. A Radical SAM core domain is found at 207–438; it reads RKNPLIEIIS…DLFYSYEPYA (232 aa). The TRAM domain occupies 438–500; it reads AQRVGEMYTV…KFSMVGEILD (63 aa). The helical transmembrane segment at 533-553 threads the bilayer; the sequence is VGIALVVGSLAFLLQLLIRFL.

It belongs to the methylthiotransferase family. CDKAL1 subfamily. The cofactor is [4Fe-4S] cluster.

It is found in the membrane. The catalysed reaction is N(6)-L-threonylcarbamoyladenosine(37) in tRNA + (sulfur carrier)-SH + AH2 + 2 S-adenosyl-L-methionine = 2-methylsulfanyl-N(6)-L-threonylcarbamoyladenosine(37) in tRNA + (sulfur carrier)-H + 5'-deoxyadenosine + L-methionine + A + S-adenosyl-L-homocysteine + 2 H(+). Its function is as follows. Catalyzes the methylthiolation of N6-threonylcarbamoyladenosine (t(6)A), leading to the formation of 2-methylthio-N6-threonylcarbamoyladenosine (ms(2)t(6)A) at position 37 in tRNAs that read codons beginning with adenine. This chain is Threonylcarbamoyladenosine tRNA methylthiotransferase, found in Drosophila pseudoobscura pseudoobscura (Fruit fly).